The primary structure comprises 57 residues: Serine protease inhibitor Kazal-type 1 (57 aa).

In terms of domain architecture, Kazal-like spans 4–57; it reads LQRQANCNLKVNGCNKIYNPICGSDGITYANECLLCLENKKRQTSILVEKSGPC. 3 cysteine pairs are disulfide-bonded: Cys10/Cys39, Cys17/Cys36, and Cys25/Cys57.

Its subcellular location is the secreted. Its function is as follows. Serine protease inhibitor which exhibits anti-trypsin activity. In the pancreas, protects against trypsin-catalyzed premature activation of zymogens. In terms of biological role, in the male reproductive tract, binds to sperm heads where it modulates sperm capacitance by inhibiting calcium uptake and nitrogen oxide (NO) production. This Canis lupus familiaris (Dog) protein is Serine protease inhibitor Kazal-type 1 (SPINK1).